We begin with the raw amino-acid sequence, 536 residues long: G-protein coupled receptor Mth2 (536 aa).

Topologically, residues 1–210 (MAERDHYHTI…DDNSTVKIIN (210 aa)) are extracellular. 5 disulfide bridges follow: Cys-17/Cys-71, Cys-73/Cys-78, Cys-82/Cys-177, Cys-83/Cys-96, and Cys-138/Cys-197. Asn-24 and Asn-33 each carry an N-linked (GlcNAc...) asparagine glycan. Asn-103, Asn-113, Asn-118, Asn-159, Asn-184, and Asn-203 each carry an N-linked (GlcNAc...) asparagine glycan. The chain crosses the membrane as a helical span at residues 211-231 (AYAMMFSIPFMMLTIAVYLLI). At 232-241 (PELRNQHGKS) the chain is on the cytoplasmic side. A helical transmembrane segment spans residues 242–262 (LVCYLVGLTVGYTSLCYVQLY). Over 263–273 (QVDATGDACKV) the chain is Extracellular. The chain crosses the membrane as a helical span at residues 274–294 (FGYTAYFFFMGAYMWLSVISF). The Cytoplasmic portion of the chain corresponds to 295–314 (DLWHNFRGTRGINRFQEKKR). Residues 315-335 (FLFYSLYSWGIAVVFLAFTYI) traverse the membrane as a helical segment. At 336-365 (AQELTNLPAYLKPGIGDGVYCWLDMSNWAA) the chain is on the extracellular side. A helical transmembrane segment spans residues 366 to 386 (MIYFYGPILVIVVANTIMFIM). The Cytoplasmic portion of the chain corresponds to 387–417 (TAIKIHGVQREMARIIASENSTKNLRTEKDK). A helical transmembrane segment spans residues 418–438 (FGLFLRLFLIMGITWLTELIS). Residues 439-449 (YFVGSDKGWSK) lie on the Extracellular side of the membrane. The helical transmembrane segment at 450 to 470 (LFYISDLANAMQGFLIFMLFV) threads the bilayer. The Cytoplasmic portion of the chain corresponds to 471–536 (MKKKVKHLIT…VDPQKTTIFR (66 aa)). The segment at 487-506 (RDGSNQRQSQYSTKTTSSSV) is disordered. Positions 492 to 505 (QRQSQYSTKTTSSS) are enriched in low complexity.

It belongs to the G-protein coupled receptor 2 family. Mth subfamily. As to quaternary structure, homodimer.

It is found in the cell membrane. In terms of biological role, involved in biological aging and stress response. Essential for adult survival. The sequence is that of G-protein coupled receptor Mth2 (mth2) from Drosophila yakuba (Fruit fly).